The primary structure comprises 676 residues: MLRSTSDRFRWSSLSLAIACTLPLATQAADTTTTQTSSKKHSTDTMVVTATGNERSSFEAPMMVTVIEGNAPTSQTAATAADMLRQVPGLTVTGSGRTNGQDVVMRGYGKQGVLTLVDGVRQGTDTGHLNSTFLDPALVKRIEIVRGPAALLYGSGALGGVIAYETVDAADMLQPGQNSGYRVYSSAATGDHSFGLGASAFGRTDDLDGILSFGTRDIGNIRQSNGFNAPNDETISNVLAKGTWQIDSIQSLSANLRYYNNSAIEPKNPQTSAPSSTNVMTNRSTIQRDAQLRYNIKPLDQEWLNATAQVYYSEVEINARPQGSAEEGREQTTEGVKLENRTRLFIESPASHLLTYGTETYKQEQTPGGATESFPQAKIRFSSGWLQDEITLRDLPVSILAGTRYDNYSGSSDGYADVDADKWSSRGAISITPTDWLMLFGSYAQAFRAPTMGEMYNDSKHFAIPIRPGLTLTNYWVPNPNLKPETNETQEYGFGLRFSDLLMAEDDLQFKVSYFDTKAKDYISTRVDMQAMTTTSVNIDQAKIWGWDASMSYKTALFNWDLAYNRTRGKNQNTDEWLDTINPDTVTSIVDVPVANSGFSVGWIGTFANRSSRVSSSTPQAGYGVNDFYVSYKGQEAFKGMTTTMLLGNVFEKEYYTPQGIPQDGRNVKFFVSYQW.

The N-terminal stretch at 1–28 (MLRSTSDRFRWSSLSLAIACTLPLATQA) is a signal peptide. Residues 44–51 (DTMVVTAT) carry the TonB box motif. In terms of domain architecture, TBDR plug spans 56-167 (SSFEAPMMVT…LGGVIAYETV (112 aa)). The 499-residue stretch at 178 to 676 (NSGYRVYSSA…NVKFFVSYQW (499 aa)) folds into the TBDR beta-barrel domain. The TonB C-terminal box motif lies at 659–676 (QGIPQDGRNVKFFVSYQW).

Belongs to the TonB-dependent receptor family.

The protein resides in the cell outer membrane. In terms of biological role, this protein is involved in the initial step of iron uptake by binding hemin, an iron chelatin siderophore that allows the bacteria to extract iron from the environment. The polypeptide is Hemin receptor (hmuR) (Yersinia pestis).